The sequence spans 135 residues: Type 3 secretion system stator protein (135 aa).

Belongs to the SctL stator family. In terms of assembly, the core secretion machinery of the T3SS is composed of approximately 20 different proteins, including cytoplasmic components, a base, an export apparatus and a needle. This subunit is part of the cytosolic complex.

It is found in the cytoplasm. Component of the type III secretion system (T3SS), also called injectisome, which is used to inject bacterial effector proteins into eukaryotic host cells. Acts as a regulator of the HrcN/SctN ATPase activity. This Rhizobium fredii (Sinorhizobium fredii) protein is Type 3 secretion system stator protein.